The following is a 246-amino-acid chain: Homeobox protein SIX6 (246 aa).

Positions 126-186 (WDGEQKTHCF…KNRRQRDRAA (61 aa)) form a DNA-binding region, homeobox. A disordered region spans residues 190-246 (NRLQQQVLSQGPGRVLRSEGEGTPEVLGVASSPAASLSSKAATSAISITSSDSECDI). Threonine 212 is modified (phosphothreonine). The segment covering 219-246 (ASSPAASLSSKAATSAISITSSDSECDI) has biased composition (low complexity). Phosphoserine occurs at positions 221, 225, 227, and 228.

Belongs to the SIX/Sine oculis homeobox family. In terms of assembly, interacts with TLE4 and TLE5. In terms of tissue distribution, in the developing embryo, expressed mainly in the ventral optic stalk, optic chiasma, the neural retina and the primordial tissues that give rise to the pituitary/hypothalamus axis. Not expressed in the lens placode.

It is found in the nucleus. May be involved in eye development. The sequence is that of Homeobox protein SIX6 (Six6) from Mus musculus (Mouse).